The sequence spans 382 residues: Protein phosphatase 1A (382 aa).

The N-myristoyl glycine moiety is linked to residue Gly-2. One can recognise a PPM-type phosphatase domain in the interval 23-291 (RYGLSSMQGW…DNMSVILICF (269 aa)). 4 residues coordinate Mn(2+): Asp-60, Gly-61, Asp-239, and Asp-282. A phosphoserine mark is found at Ser-375 and Ser-377.

It belongs to the PP2C family. Monomer. Interacts with SMAD2; the interaction dephosphorylates SMAD2 in its C-terminal SXS motif resulting in disruption of the SMAD2/SMAD4 complex, SMAD2 nuclear export and termination of the TGF-beta-mediated signaling. Interacts with SMAD2; the interaction dephosphorylates SMAD2 in its C-terminal SXS motif resulting in disruption of the SMAD2/SMAD4 complex, SMAD2 nuclear export and termination of the TGF-beta-mediated signaling. Interacts with the phosphorylated form of IKBKB/IKKB. Mg(2+) serves as cofactor. Mn(2+) is required as a cofactor. In terms of processing, N-myristoylation is essential for the recognition of its substrates for dephosphorylation.

The protein resides in the nucleus. It localises to the cytoplasm. The protein localises to the cytosol. Its subcellular location is the membrane. It catalyses the reaction O-phospho-L-seryl-[protein] + H2O = L-seryl-[protein] + phosphate. It carries out the reaction O-phospho-L-threonyl-[protein] + H2O = L-threonyl-[protein] + phosphate. Functionally, enzyme with a broad specificity. Negatively regulates TGF-beta signaling through dephosphorylating SMAD2 and SMAD3, resulting in their dissociation from SMAD4, nuclear export of the SMADs and termination of the TGF-beta-mediated signaling. Dephosphorylates PRKAA1 and PRKAA2. Plays an important role in the termination of TNF-alpha-mediated NF-kappa-B activation through dephosphorylating and inactivating IKBKB/IKKB. In Oryctolagus cuniculus (Rabbit), this protein is Protein phosphatase 1A (PPM1A).